Consider the following 85-residue polypeptide: Large ribosomal subunit protein bL27 (85 aa).

A disordered region spans residues M1–G22.

It belongs to the bacterial ribosomal protein bL27 family.

In Aliivibrio salmonicida (strain LFI1238) (Vibrio salmonicida (strain LFI1238)), this protein is Large ribosomal subunit protein bL27.